We begin with the raw amino-acid sequence, 347 residues long: MRVADFHFDLPESLIARHPLAERRASRLLQLDGPSGALRHGQFTDLLEQLRPGDLMVFNNTRVIPARLFGQKASGGRLEVLVERVLDQHRVLAHVRSSKSPKPGSQILIEGGGEAEMVARHDALFELRFAEPVLPLLERVGHMPLPPYIDRPDDEADRERYQTVYAEKAGAVAAPTAGLHFDDELLAAIRAKGVETAFVTLHVGAGTFQPVRVERIEDHHMHSEWLEVSQEVVDAVAACRARGGRVVAVGTTSVRSLETAAQSSELKPFSGDTDIFIYPGRPFHVVDALVTNFHLPESTLLMLVSAFAGYAETMAAYRAAVEQGYRFFSYGDAMFITRNPAARGPEV.

Belongs to the QueA family. As to quaternary structure, monomer.

It is found in the cytoplasm. The catalysed reaction is 7-aminomethyl-7-carbaguanosine(34) in tRNA + S-adenosyl-L-methionine = epoxyqueuosine(34) in tRNA + adenine + L-methionine + 2 H(+). It functions in the pathway tRNA modification; tRNA-queuosine biosynthesis. In terms of biological role, transfers and isomerizes the ribose moiety from AdoMet to the 7-aminomethyl group of 7-deazaguanine (preQ1-tRNA) to give epoxyqueuosine (oQ-tRNA). The sequence is that of S-adenosylmethionine:tRNA ribosyltransferase-isomerase from Ectopseudomonas mendocina (strain ymp) (Pseudomonas mendocina).